The following is a 579-amino-acid chain: Type II methyltransferase M.BseCI (579 aa).

It belongs to the N(4)/N(6)-methyltransferase family.

The catalysed reaction is a 2'-deoxyadenosine in DNA + S-adenosyl-L-methionine = an N(6)-methyl-2'-deoxyadenosine in DNA + S-adenosyl-L-homocysteine + H(+). Functionally, a gamma subtype methylase, recognizes the double-stranded sequence 5'-ATCGAT-3', methylation on A-5 on both strands, and protects the DNA from cleavage by the BanIII endonuclease. This chain is Type II methyltransferase M.BseCI, found in Geobacillus stearothermophilus (Bacillus stearothermophilus).